Reading from the N-terminus, the 300-residue chain is Ribosomal protein bS6--L-glutamate ligase (300 aa).

The ATP-grasp domain occupies 104 to 287; it reads MQLLARQGID…IAGKMIRWIE (184 aa). ATP is bound by residues K141, 178–179, D187, and 211–213; these read EY and RSN. Residues D248, E260, and N262 each coordinate Mg(2+). Residues D248, E260, and N262 each contribute to the Mn(2+) site.

This sequence belongs to the RimK family. It depends on Mg(2+) as a cofactor. Requires Mn(2+) as cofactor.

Its function is as follows. An L-glutamate ligase that catalyzes the ATP-dependent post-translational addition of glutamate residues to the C-terminus of ribosomal protein bS6 (RpsF). Is also able to catalyze the synthesis of poly-alpha-glutamate in vitro, via ATP hydrolysis from unprotected glutamate as substrate. The number of glutamate residues added to either RpsF or to poly-alpha-glutamate changes with pH. This chain is Ribosomal protein bS6--L-glutamate ligase, found in Shigella boydii serotype 4 (strain Sb227).